A 398-amino-acid chain; its full sequence is Protein trichome birefringence-like 45 (398 aa).

The chain crosses the membrane as a helical; Signal-anchor for type II membrane protein span at residues 1-21 (MAAVQCLTFLFLFLLQNATSA). The short motif at 131–133 (GDS) is the GDS motif element. A DCXHWCLPGXXDXWN motif motif is present at residues 375 to 389 (DCSHWCLPGLPDTWN).

This sequence belongs to the PC-esterase family. TBL subfamily.

It is found in the membrane. In terms of biological role, may act as a bridging protein that binds pectin and other cell wall polysaccharides. Probably involved in maintaining esterification of pectins. May be involved in the specific O-acetylation of cell wall polymers. In Arabidopsis thaliana (Mouse-ear cress), this protein is Protein trichome birefringence-like 45 (TBL45).